The following is a 291-amino-acid chain: Formamidopyrimidine-DNA glycosylase (291 aa).

Catalysis depends on proline 2, which acts as the Schiff-base intermediate with DNA. Catalysis depends on glutamate 3, which acts as the Proton donor. Lysine 60 (proton donor; for beta-elimination activity) is an active-site residue. Residues histidine 97, arginine 116, and arginine 161 each contribute to the DNA site. The FPG-type zinc-finger motif lies at 246–280 (WVYNRAGEPCRVCGMPIQRIRLAGRSSHFCSECQT). The active-site Proton donor; for delta-elimination activity is the arginine 270.

This sequence belongs to the FPG family. As to quaternary structure, monomer. Zn(2+) is required as a cofactor.

It carries out the reaction Hydrolysis of DNA containing ring-opened 7-methylguanine residues, releasing 2,6-diamino-4-hydroxy-5-(N-methyl)formamidopyrimidine.. It catalyses the reaction 2'-deoxyribonucleotide-(2'-deoxyribose 5'-phosphate)-2'-deoxyribonucleotide-DNA = a 3'-end 2'-deoxyribonucleotide-(2,3-dehydro-2,3-deoxyribose 5'-phosphate)-DNA + a 5'-end 5'-phospho-2'-deoxyribonucleoside-DNA + H(+). Its function is as follows. Involved in base excision repair of DNA damaged by oxidation or by mutagenic agents. Acts as a DNA glycosylase that recognizes and removes damaged bases. Has a preference for oxidized purines, such as 7,8-dihydro-8-oxoguanine (8-oxoG). Has AP (apurinic/apyrimidinic) lyase activity and introduces nicks in the DNA strand. Cleaves the DNA backbone by beta-delta elimination to generate a single-strand break at the site of the removed base with both 3'- and 5'-phosphates. The sequence is that of Formamidopyrimidine-DNA glycosylase from Nostoc punctiforme (strain ATCC 29133 / PCC 73102).